We begin with the raw amino-acid sequence, 115 residues long: uncharacterized protein (115 aa).

This is an uncharacterized protein from Spirochaeta aurantia.